Consider the following 103-residue polypeptide: Pyrimidine/purine nucleoside phosphorylase (103 aa).

Belongs to the nucleoside phosphorylase PpnP family.

It catalyses the reaction a purine D-ribonucleoside + phosphate = a purine nucleobase + alpha-D-ribose 1-phosphate. The enzyme catalyses adenosine + phosphate = alpha-D-ribose 1-phosphate + adenine. It carries out the reaction cytidine + phosphate = cytosine + alpha-D-ribose 1-phosphate. The catalysed reaction is guanosine + phosphate = alpha-D-ribose 1-phosphate + guanine. It catalyses the reaction inosine + phosphate = alpha-D-ribose 1-phosphate + hypoxanthine. The enzyme catalyses thymidine + phosphate = 2-deoxy-alpha-D-ribose 1-phosphate + thymine. It carries out the reaction uridine + phosphate = alpha-D-ribose 1-phosphate + uracil. The catalysed reaction is xanthosine + phosphate = alpha-D-ribose 1-phosphate + xanthine. Functionally, catalyzes the phosphorolysis of diverse nucleosides, yielding D-ribose 1-phosphate and the respective free bases. Can use uridine, adenosine, guanosine, cytidine, thymidine, inosine and xanthosine as substrates. Also catalyzes the reverse reactions. The sequence is that of Pyrimidine/purine nucleoside phosphorylase from Shewanella baltica (strain OS155 / ATCC BAA-1091).